We begin with the raw amino-acid sequence, 144 residues long: Large ribosomal subunit protein uL15 (144 aa).

The tract at residues 1–54 (MRLNTLSPAEGSKKAGKRLGRGIGSGLGKTGGRGHKGQKSRSGGGVRRGFEGGQ) is disordered. A compositionally biased stretch (gly residues) spans 21 to 31 (RGIGSGLGKTG).

It belongs to the universal ribosomal protein uL15 family. In terms of assembly, part of the 50S ribosomal subunit.

In terms of biological role, binds to the 23S rRNA. The sequence is that of Large ribosomal subunit protein uL15 from Klebsiella pneumoniae (strain 342).